The following is a 224-amino-acid chain: Heme response regulator HssR (224 aa).

In terms of domain architecture, Response regulatory spans 3-116; that stretch reads TCLIVDDDPK…ELMFRIKAVL (114 aa). Asp52 carries the post-translational modification 4-aspartylphosphate. The segment at residues 124–222 is a DNA-binding region (ompR/PhoB-type); that stretch reads NNEVSIGNLT…VRGLGYKVDD (99 aa).

In terms of processing, phosphorylated by HssS.

It localises to the cytoplasm. Member of the two-component regulatory system HssS/HssR involved in intracellular heme homeostasis and tempering of staphylococcal virulence. Phosphorylated HssR binds to a direct repeat sequence within hrtAB promoter and activates the expression of hrtAB, an efflux pump, in response to extracellular heme, hemin, hemoglobin or blood. The chain is Heme response regulator HssR (hssR) from Staphylococcus saprophyticus subsp. saprophyticus (strain ATCC 15305 / DSM 20229 / NCIMB 8711 / NCTC 7292 / S-41).